The following is a 481-amino-acid chain: RAC-alpha serine/threonine-protein kinase (481 aa).

The 104-residue stretch at 5-108 folds into the PH domain; the sequence is AIVKEGWLHK…WIQVIQHVAD (104 aa). Residues 120-141 are disordered; that stretch reads VRSGDSPSDNSGAEEMEVSHSK. 2 O-linked (GlcNAc) serine glycosylation sites follow: serine 127 and serine 130. The Protein kinase domain occupies 151 to 409; it reads FEYLKLLGKG…AKEIMQHKFF (259 aa). ATP is bound by residues 157–165 and lysine 180; that span reads LGKGTFGKV. Aspartate 275 acts as the Proton acceptor in catalysis. An O-linked (GlcNAc) threonine glycan is attached at threonine 306. The residue at position 309 (threonine 309) is a Phosphothreonine; by PDPK1. Residue threonine 313 is glycosylated (O-linked (GlcNAc) threonine). One can recognise an AGC-kinase C-terminal domain in the interval 410 to 481; it reads AGIVWQDVYE…QFSYSASGNA (72 aa). The residue at position 474 (serine 474) is a Phosphoserine. O-linked (GlcNAc) serine; alternate glycosylation is present at serine 474. Tyrosine 475 is modified (phosphotyrosine).

The protein belongs to the protein kinase superfamily. AGC Ser/Thr protein kinase family. RAC subfamily. Post-translationally, cleavage by caspase-3/CASP3. Cleaved at the caspase-3 consensus site Asp-463 during apoptosis, resulting in down-regulation of the AKT signaling pathway and decreased cell survival. In terms of processing, phosphorylation on Thr-309 and Ser-474 is required for full activity. Phosphorylation of the activation loop at Thr-309 by PDPK1/PDK1 is a prerequisite for full activation. Phosphorylation by mTORC2 at Ser-474 in response to growth factors plays a key role in AKT1 activation by facilitating subsequent phosphorylation of the activation loop by PDPK1/PDK1. As to expression, expressed in the oocyte.

The protein resides in the cytoplasm. The protein localises to the nucleus. The enzyme catalyses L-seryl-[protein] + ATP = O-phospho-L-seryl-[protein] + ADP + H(+). It carries out the reaction L-threonyl-[protein] + ATP = O-phospho-L-threonyl-[protein] + ADP + H(+). Its activity is regulated as follows. Activated in response to insulin. Three specific sites, one in the kinase domain (Thr-309) and the two other ones in the C-terminal regulatory region (Ser-474 and Tyr-475), need to be phosphorylated for its full activation. In terms of biological role, AKT1 is one of several closely related serine/threonine-protein kinases known as the AKT kinase, and which regulate many processes including metabolism, proliferation, cell survival, growth and angiogenesis. This is mediated through serine and/or threonine phosphorylation of a range of downstream substrates. Over 100 substrate candidates have been reported so far, but for most of them, no isoform specificity has been reported. Signals downstream of phosphatidylinositol 3-kinase (PI(3)K) to mediate the effects of various growth factors such as platelet-derived growth factor (PDGF), epidermal growth factor (EGF), insulin and insulin-like growth factor 1 (IGF1). Plays a role as a key modulator of the AKT-mTOR signaling pathway controlling the tempo of the process of newborn neurons integration during adult neurogenesis, including correct neuron positioning, dendritic development and synapse formation. Plays a role in glucose transport by mediating insulin-induced translocation of the GLUT4 glucose transporter to the cell surface. Mediates the antiapoptotic effects of IGF1. Mediates insulin-stimulated protein synthesis, partly by playing a role in both insulin-induced phosphorylation of 4E-BP1 and in insulin-induced activation of p70 S6 kinase. Promotes glycogen synthesis by mediating the insulin-induced activation of glycogen synthase. Required for insulin-stimulated meiotic reinitiation during oocyte maturation. May be involved in the regulation of vesicular functions such as preciliary trafficking and endocytic recycling. This chain is RAC-alpha serine/threonine-protein kinase, found in Xenopus laevis (African clawed frog).